Here is a 401-residue protein sequence, read N- to C-terminus: Aspartokinase (401 aa).

The protein belongs to the aspartokinase family.

It catalyses the reaction L-aspartate + ATP = 4-phospho-L-aspartate + ADP. Its pathway is amino-acid biosynthesis; L-lysine biosynthesis via DAP pathway; (S)-tetrahydrodipicolinate from L-aspartate: step 1/4. It functions in the pathway amino-acid biosynthesis; L-methionine biosynthesis via de novo pathway; L-homoserine from L-aspartate: step 1/3. It participates in amino-acid biosynthesis; L-threonine biosynthesis; L-threonine from L-aspartate: step 1/5. This chain is Aspartokinase (lysC), found in Rickettsia conorii (strain ATCC VR-613 / Malish 7).